The following is a 510-amino-acid chain: Membrane-bound transcription factor site-2 protease (510 aa).

The Cytoplasmic segment spans residues 1–3; sequence MIP. Residues 4-24 traverse the membrane as a helical segment; sequence VSLVVVVVGGWTAVYLADLVL. Residues 25–74 lie on the Lumenal side of the membrane; that stretch reads KSSVYFKHSYEDWLEKNGLSISPFHIRWQTSVFNRAFYSWGRRKARMLYQ. The next 2 membrane-spanning stretches (helical) occupy residues 75–95 and 96–107; these read WFNF…FLLG and KTLMQTLAQMMA. At 108–135 the chain is on the lumenal side; that stretch reads DSPSSSSSSSSSSSSSSSSSIHNEQVLQ. A helical membrane pass occupies residues 136–160; sequence VVVPGINLPVNQLTYFFAAVLISGV. Position 162 (His-162) interacts with Zn(2+). Residue Glu-163 is part of the active site. 3 helical membrane passes run 165 to 177, 178 to 200, and 220 to 242; these read GHGI…QVRF, NGFG…TTHL, and FVLA…PFYY. His-166 is a Zn(2+) binding site. Topologically, residues 243-437 are lumenal; it reads TGVGVLITEV…LPVIVETFVK (195 aa). N-linked (GlcNAc...) asparagine glycosylation is present at Asn-328. A run of 2 helical transmembrane segments spans residues 438 to 455 and 456 to 467; these read YLIS…VPCF and ALDGQWILNSFL. The Lumenal portion of the chain corresponds to 468–483; that stretch reads DATLTSVIGDNDVKDL. Residues 484–504 traverse the membrane as a helical segment; sequence IGFFILLGGSVLLAANVTLGL. At 505–510 the chain is on the cytoplasmic side; sequence WMVTAR.

Belongs to the peptidase M50A family. Requires Zn(2+) as cofactor.

The protein localises to the membrane. Its subcellular location is the cytoplasm. It is found in the golgi apparatus membrane. The enzyme catalyses Cleaves several transcription factors that are type-2 transmembrane proteins within membrane-spanning domains. Known substrates include sterol regulatory element-binding protein (SREBP) -1, SREBP-2 and forms of the transcriptional activator ATF6. SREBP-2 is cleaved at the site 477-DRSRILL-|-CVLTFLCLSFNPLTSLLQWGGA-505. The residues Asn-Pro, 11 residues distal to the site of cleavage in the membrane-spanning domain, are important for cleavage by S2P endopeptidase. Replacement of either of these residues does not prevent cleavage, but there is no cleavage if both of these residues are replaced.. In terms of biological role, zinc metalloprotease that mediates intramembrane proteolysis of proteins such as ATF6, ATF6B, SREBF1/SREBP1 and SREBF2/SREBP2. Catalyzes the second step in the proteolytic activation of the sterol regulatory element-binding proteins (SREBPs) SREBF1/SREBP1 and SREBF2/SREBP2: cleaves SREBPs within the first transmembrane segment, thereby releasing the N-terminal segment with a portion of the transmembrane segment attached. Mature N-terminal SREBP fragments shuttle to the nucleus and activate gene transcription. Also mediates the second step in the proteolytic activation of the cyclic AMP-dependent transcription factor ATF-6 (ATF6 and ATF6B). Involved in intramembrane proteolysis during bone formation. In astrocytes and osteoblasts, upon DNA damage and ER stress, mediates the second step of the regulated intramembrane proteolytic activation of the transcription factor CREB3L1, leading to the inhibition of cell-cycle progression. This chain is Membrane-bound transcription factor site-2 protease (MBTPS2), found in Cricetulus griseus (Chinese hamster).